Here is a 433-residue protein sequence, read N- to C-terminus: Coiled-coil domain-containing protein 71 (433 aa).

S125 carries the phosphoserine modification. Disordered regions lie at residues 204–256, 284–310, and 325–396; these read LKVR…GCSA, QTKT…KAAV, and KAAQ…RKSQ. 2 stretches are compositionally biased toward basic residues: residues 216–230 and 288–306; these read KAPR…KHLT and VRVR…RAKA. Residues 260 to 330 are a coiled coil; it reads KTVQAQASQT…QAKAKAAQTK (71 aa).

The sequence is that of Coiled-coil domain-containing protein 71 (Ccdc71) from Mus musculus (Mouse).